The primary structure comprises 148 residues: uncharacterized protein (148 aa).

Positions 4-65 constitute an HTH asnC-type domain; that stretch reads MDKVDLQLIK…IPNLEKLNYM (62 aa). Positions 23 to 42 form a DNA-binding region, H-T-H motif; sequence YRELAEMLGTTRQRVARKVD.

This is an uncharacterized protein from Pyrococcus furiosus (strain ATCC 43587 / DSM 3638 / JCM 8422 / Vc1).